We begin with the raw amino-acid sequence, 88 residues long: Large ribosomal subunit protein bL31B (88 aa).

Belongs to the bacterial ribosomal protein bL31 family. Type B subfamily. As to quaternary structure, part of the 50S ribosomal subunit.

In Janthinobacterium sp. (strain Marseille) (Minibacterium massiliensis), this protein is Large ribosomal subunit protein bL31B.